Here is a 40-residue protein sequence, read N- to C-terminus: Large ribosomal subunit protein bL36 (40 aa).

The protein belongs to the bacterial ribosomal protein bL36 family.

This chain is Large ribosomal subunit protein bL36, found in Coxiella burnetii (strain Dugway 5J108-111).